Consider the following 573-residue polypeptide: Sulfate adenylyltransferase (573 aa).

The interval Met1–Tyr169 is N-terminal. The interval Asp170–Gln394 is catalytic. Gln197 is a binding site for sulfate. ATP-binding positions include Gln197–Asn200 and Gly291–His294. Residues Thr198, Arg199, and Asn200 contribute to the active site. Arg199 provides a ligand contact to sulfate. Sulfate is bound at residue Ala295. Met333 provides a ligand contact to ATP. Residues Gln395–Phe573 are allosteric regulation domain; adenylyl-sulfate kinase-like. 3'-phosphoadenylyl sulfate contacts are provided by residues Glu434–Arg437, Arg451, Ile477–Ala478, and Arg515.

This sequence in the N-terminal section; belongs to the sulfate adenylyltransferase family. It in the C-terminal section; belongs to the APS kinase family. Homohexamer. Dimer of trimers.

The protein resides in the cytoplasm. The catalysed reaction is sulfate + ATP + H(+) = adenosine 5'-phosphosulfate + diphosphate. Its pathway is sulfur metabolism; hydrogen sulfide biosynthesis; sulfite from sulfate: step 1/3. Its activity is regulated as follows. Allosterically inhibited by 3'-phosphoadenosine 5'-phosphosulfate (PAPS). Its function is as follows. Catalyzes the first intracellular reaction of sulfate assimilation, forming adenosine-5'-phosphosulfate (APS) from inorganic sulfate and ATP. Plays an important role in sulfate activation as a component of the biosynthesis pathway of sulfur-containing amino acids. The polypeptide is Sulfate adenylyltransferase (cys-11) (Neurospora crassa (strain ATCC 24698 / 74-OR23-1A / CBS 708.71 / DSM 1257 / FGSC 987)).